Reading from the N-terminus, the 196-residue chain is Large ribosomal subunit protein uL18 (196 aa).

It belongs to the universal ribosomal protein uL18 family. Part of the 50S ribosomal subunit. Contacts the 5S and 23S rRNAs.

In terms of biological role, this is one of the proteins that bind and probably mediate the attachment of the 5S RNA into the large ribosomal subunit, where it forms part of the central protuberance. This Desulfurococcus amylolyticus (strain DSM 18924 / JCM 16383 / VKM B-2413 / 1221n) (Desulfurococcus kamchatkensis) protein is Large ribosomal subunit protein uL18.